We begin with the raw amino-acid sequence, 126 residues long: 13 kDa ribonucleoprotein-associated protein (126 aa).

This sequence belongs to the eukaryotic ribosomal protein eL8 family. Component of the U3 snoRNP particle. Binds to the C'/D and B/C motifs in U3 snoRNA. Component of the 25S U4/U6.U5 tri-snRNP particle, a subcomplex of the spliceosome. Binds to the 5' stem-loop of U4 snRNA.

It is found in the nucleus. Its subcellular location is the nucleolus. Its function is as follows. Common component of the spliceosome and rRNA processing machinery. In association with the spliceosomal U4/U6.U5 tri-snRNP particle, required for splicing of pre-mRNA. In association with box C/D snoRNPs, required for processing of pre-ribosomal RNA (rRNA) and site-specific 2'-O-methylation of substrate RNAs. Essential for the accumulation and stability of U4 snRNA, U6 snRNA, and box C/D snoRNAs. The protein is 13 kDa ribonucleoprotein-associated protein (SNU13) of Yarrowia lipolytica (strain CLIB 122 / E 150) (Yeast).